We begin with the raw amino-acid sequence, 144 residues long: Transcriptional regulator SlyA (144 aa).

One can recognise an HTH marR-type domain in the interval 2 to 135 (ESPLGSDLAR…LIKLIAKLEH (134 aa)). The segment at residues 49-72 (QIQLAKAIGIEQPSLVRTLDQLEE) is a DNA-binding region (H-T-H motif).

The protein belongs to the SlyA family. Homodimer.

In terms of biological role, transcription regulator that can specifically activate or repress expression of target genes. This chain is Transcriptional regulator SlyA, found in Escherichia coli O127:H6 (strain E2348/69 / EPEC).